The sequence spans 234 residues: Carboxy-S-adenosyl-L-methionine synthase (234 aa).

S-adenosyl-L-methionine is bound by residues Y35, 60–62 (GCS), 109–110 (DI), N124, and R191.

The protein belongs to the class I-like SAM-binding methyltransferase superfamily. Cx-SAM synthase family. In terms of assembly, homodimer.

The enzyme catalyses prephenate + S-adenosyl-L-methionine = carboxy-S-adenosyl-L-methionine + 3-phenylpyruvate + H2O. In terms of biological role, catalyzes the conversion of S-adenosyl-L-methionine (SAM) to carboxy-S-adenosyl-L-methionine (Cx-SAM). The polypeptide is Carboxy-S-adenosyl-L-methionine synthase (Campylobacter fetus subsp. fetus (strain 82-40)).